The primary structure comprises 605 residues: Glutamine--fructose-6-phosphate aminotransferase [isomerizing] (605 aa).

The active-site Nucleophile; for GATase activity is Cys2. A Glutamine amidotransferase type-2 domain is found at 2 to 220 (CGIVGVTGKD…DGEIVVVKPD (219 aa)). SIS domains are found at residues 286–426 (LLTA…VDQP) and 458–595 (AKSA…VDKP). The For Fru-6P isomerization activity role is filled by Lys600.

In terms of assembly, homodimer.

The protein resides in the cytoplasm. It catalyses the reaction D-fructose 6-phosphate + L-glutamine = D-glucosamine 6-phosphate + L-glutamate. In terms of biological role, catalyzes the first step in hexosamine metabolism, converting fructose-6P into glucosamine-6P using glutamine as a nitrogen source. In Lactiplantibacillus plantarum (strain ATCC BAA-793 / NCIMB 8826 / WCFS1) (Lactobacillus plantarum), this protein is Glutamine--fructose-6-phosphate aminotransferase [isomerizing].